The following is a 1238-amino-acid chain: Anion exchange protein 2 (1238 aa).

The interval 1–238 (MSGTPRRPAS…YNLQERRRIG (238 aa)) is disordered. The Cytoplasmic segment spans residues 1-704 (MSGTPRRPAS…SDFRDALDPQ (704 aa)). Composition is skewed to basic and acidic residues over residues 37–49 (DLHR…RFEE) and 58–75 (GGEE…EYHR). 2 stretches are compositionally biased toward basic residues: residues 76 to 85 (QSSHHIHHPL) and 94 to 110 (RRRK…RRRP). Acidic residues predominate over residues 120 to 133 (TIEEGEEDEDETSE). Phosphoserine is present on residues Ser132, Ser144, Ser170, and Ser172. The segment covering 141-154 (TDPSPASTPTSVQF) has biased composition (polar residues). A compositionally biased stretch (gly residues) spans 205–215 (GTAGGDDGGAS). The residue at position 239 (Ser239) is a Phosphoserine. Phosphothreonine is present on Thr253. The residue at position 270 (Lys270) is an N6-methyllysine. Residues 277-315 (VPGVRRHLVRKNAKGSSQSSREGREPGPTPRTRPRAPHK) are disordered. Basic residues predominate over residues 280 to 289 (VRRHLVRKNA). A Phosphoserine modification is found at Ser439. The interval 445–466 (SLLGHHHTQGAESDPHVTEPLI) is disordered. 4 helical membrane-spanning segments follow: residues 705–728 (CLAA…GLLG), 734–771 (LIGV…LLVF), 791–813 (VWIG…SFLV), and 823–844 (IFAF…VKIF). Positions 705–1238 (CLAAVIFIYF…DEYNEMPMPV (534 aa)) are membrane (anion exchange). Topologically, residues 845–897 (QEHPLHGCLASNSSEADGGKNTTWTEAAPTPGHGNTSSAEQAGVERPQGQPNT) are extracellular. 3 N-linked (GlcNAc...) asparagine glycosylation sites follow: Asn856, Asn865, and Asn879. A compositionally biased stretch (polar residues) spans 858–869 (SEADGGKNTTWT). Residues 858–892 (SEADGGKNTTWTEAAPTPGHGNTSSAEQAGVERPQ) are disordered. Residues 898-915 (ALLSLVLMAGTFFIAFFL) form a helical membrane-spanning segment. Residues 916–930 (RKFKNSRFFPGRIRR) lie on the Cytoplasmic side of the membrane. Helical transmembrane passes span 931–951 (VIGD…DYSI), 985–1007 (PFPV…LIFM), 1033–1054 (LLLI…LAAA), 1088–1133 (VTGL…IQFY), and 1160–1196 (MHLF…TVPL). Cys1170 carries S-palmitoyl cysteine lipidation.

This sequence belongs to the anion exchanger (TC 2.A.31) family. In terms of tissue distribution, expressed in the cochlea (at protein level).

Its subcellular location is the apical cell membrane. It is found in the basolateral cell membrane. The enzyme catalyses hydrogencarbonate(in) + chloride(out) = hydrogencarbonate(out) + chloride(in). Functionally, sodium-independent anion exchanger which mediates the electroneutral exchange of chloride for bicarbonate ions across the cell membrane. Plays an important role in osteoclast differentiation and function. Regulates bone resorption and calpain-dependent actin cytoskeleton organization in osteoclasts via anion exchange-dependent control of pH. Essential for intracellular pH regulation in CD8(+) T-cells upon CD3 stimulation, modulating CD8(+) T-cell response. The chain is Anion exchange protein 2 (SLC4A2) from Cavia porcellus (Guinea pig).